We begin with the raw amino-acid sequence, 270 residues long: Putative pyruvate, phosphate dikinase regulatory protein (270 aa).

Residue 147 to 154 (GVSRSSKT) participates in ADP binding.

This sequence belongs to the pyruvate, phosphate/water dikinase regulatory protein family. PDRP subfamily.

The enzyme catalyses N(tele)-phospho-L-histidyl/L-threonyl-[pyruvate, phosphate dikinase] + ADP = N(tele)-phospho-L-histidyl/O-phospho-L-threonyl-[pyruvate, phosphate dikinase] + AMP + H(+). The catalysed reaction is N(tele)-phospho-L-histidyl/O-phospho-L-threonyl-[pyruvate, phosphate dikinase] + phosphate + H(+) = N(tele)-phospho-L-histidyl/L-threonyl-[pyruvate, phosphate dikinase] + diphosphate. In terms of biological role, bifunctional serine/threonine kinase and phosphorylase involved in the regulation of the pyruvate, phosphate dikinase (PPDK) by catalyzing its phosphorylation/dephosphorylation. The sequence is that of Putative pyruvate, phosphate dikinase regulatory protein from Citrifermentans bemidjiense (strain ATCC BAA-1014 / DSM 16622 / JCM 12645 / Bem) (Geobacter bemidjiensis).